The primary structure comprises 250 residues: Endonuclease NucS (250 aa).

It belongs to the NucS endonuclease family.

The protein resides in the cytoplasm. In terms of biological role, cleaves both 3' and 5' ssDNA extremities of branched DNA structures. The protein is Endonuclease NucS of Sulfolobus acidocaldarius (strain ATCC 33909 / DSM 639 / JCM 8929 / NBRC 15157 / NCIMB 11770).